A 318-amino-acid chain; its full sequence is Cyclic AMP receptor-like protein F (318 aa).

Topologically, residues 1 to 3 (MKD) are extracellular. The helical transmembrane segment at 4–24 (IILIYMICAPISMIGSLFIII) threads the bilayer. Topologically, residues 25–38 (TWLLYAKLKNSGSN) are cytoplasmic. A helical membrane pass occupies residues 39–59 (FIFFQAISDFFFTSKYIITII). Residues 60–83 (FYYINIPQFSDETSSTDTNPYCFS) lie on the Extracellular side of the membrane. A disulfide bond links Cys81 and Cys177. A helical membrane pass occupies residues 84-104 (LGLFSQFFGQATIMWSYTMTV). Topologically, residues 105 to 145 (KVFHSYFEMKKKNNNNNIGSNNIGGGGGGNNSNKQNSIDKT) are cytoplasmic. The chain crosses the membrane as a helical span at residues 146-166 (LKWYHLFVWGFCLVNATIIGI). Over 167–187 (SKQYGPSSTGCWIVGANNPYR) the chain is Extracellular. The chain crosses the membrane as a helical span at residues 188–208 (FFELVPLYFTITTSIIILILI). Residues 209 to 234 (LVKMKKSKPSSLLPTESMRYNQQARE) lie on the Cytoplasmic side of the membrane. The chain crosses the membrane as a helical span at residues 235 to 255 (FKIQLMKFVLIFIIFWLPATV). At 256–267 (LRTLEYFGIEKT) the chain is on the extracellular side. The chain crosses the membrane as a helical span at residues 268–288 (FFILLDAVSVSLQALANSLVW). Residues 289–318 (ATSPQFLKLMKRKVVNKPNKQMEREYLINK) are Cytoplasmic-facing.

This sequence belongs to the G-protein coupled receptor 5 family.

The protein localises to the membrane. In terms of biological role, receptor for cAMP. The sequence is that of Cyclic AMP receptor-like protein F (crlF) from Dictyostelium discoideum (Social amoeba).